The sequence spans 173 residues: Mesencephalic astrocyte-derived neurotrophic factor homolog (173 aa).

Residues 1 to 22 (MKTWHMVVVIGFLATLAQTSLA) form the signal peptide. Disulfide bonds link Cys-28–Cys-114, Cys-31–Cys-103, Cys-61–Cys-72, and Cys-148–Cys-151.

This sequence belongs to the ARMET family.

The protein resides in the secreted. Required during the maturation of the embryonic nervous system for maintenance of neuronal and cuticular connectivity. Essential for maintenance of dopaminergic neurons and dopamine levels. This chain is Mesencephalic astrocyte-derived neurotrophic factor homolog, found in Drosophila sechellia (Fruit fly).